A 402-amino-acid polypeptide reads, in one-letter code: mRNA-capping enzyme subunit alpha (402 aa).

The active-site N6-GMP-lysine intermediate is Lys-66.

This sequence belongs to the eukaryotic GTase family. In terms of assembly, heterodimer. The mRNA-capping enzyme is composed of two separate chains alpha and beta, respectively a mRNA guanylyltransferase and an mRNA 5'-triphosphate monophosphatase.

It localises to the nucleus. It carries out the reaction a 5'-end diphospho-ribonucleoside in mRNA + GTP + H(+) = a 5'-end (5'-triphosphoguanosine)-ribonucleoside in mRNA + diphosphate. Second step of mRNA capping. Transfer of the GMP moiety of GTP to the 5'-end of RNA via an enzyme-GMP covalent reaction intermediate. The polypeptide is mRNA-capping enzyme subunit alpha (rnp-2) (Neurospora crassa (strain ATCC 24698 / 74-OR23-1A / CBS 708.71 / DSM 1257 / FGSC 987)).